The primary structure comprises 458 residues: Tyrosine phenol-lyase (458 aa).

N6-(pyridoxal phosphate)lysine is present on lysine 258.

It belongs to the beta-eliminating lyase family. Homotetramer. The cofactor is pyridoxal 5'-phosphate.

It catalyses the reaction L-tyrosine + H2O = phenol + pyruvate + NH4(+). This is Tyrosine phenol-lyase (tpl) from Pasteurella multocida (strain Pm70).